The primary structure comprises 799 residues: Cadherin-8 (799 aa).

An N-terminal signal peptide occupies residues 1-29 (MPERLAETLMDLWTPLIILWITLPSCVYT). Positions 30-61 (APMNQAHVLTTGSPLELSRQSEDMRILSRSKR) are excised as a propeptide. 5 Cadherin domains span residues 62–167 (GWVW…APEF), 168–276 (LNGP…PPKF), 277–391 (AQSL…PPVF), 392–494 (SSPT…DNAP), and 495–616 (EFAS…YVLP). Topologically, residues 62–621 (GWVWNQMFVL…AYVLPIGLSM (560 aa)) are extracellular. N188 carries N-linked (GlcNAc...) asparagine glycosylation. Residues N463, N473, and N544 are each glycosylated (N-linked (GlcNAc...) asparagine). Residues 622-642 (GALIAILACIILLLVIVVLFV) traverse the membrane as a helical segment. At 643–799 (TLRRHKNEPL…YSVGESDKET (157 aa)) the chain is on the cytoplasmic side. S795 is subject to Phosphoserine.

The protein localises to the cell membrane. Functionally, cadherins are calcium-dependent cell adhesion proteins. They preferentially interact with themselves in a homophilic manner in connecting cells; cadherins may thus contribute to the sorting of heterogeneous cell types. The polypeptide is Cadherin-8 (Cdh8) (Mus musculus (Mouse)).